The following is a 258-amino-acid chain: Ribonuclease PH (258 aa).

Phosphate-binding positions include Arg-88 and 126–128; that span reads GTR.

This sequence belongs to the RNase PH family. As to quaternary structure, homohexameric ring arranged as a trimer of dimers.

The enzyme catalyses tRNA(n+1) + phosphate = tRNA(n) + a ribonucleoside 5'-diphosphate. Phosphorolytic 3'-5' exoribonuclease that plays an important role in tRNA 3'-end maturation. Removes nucleotide residues following the 3'-CCA terminus of tRNAs; can also add nucleotides to the ends of RNA molecules by using nucleoside diphosphates as substrates, but this may not be physiologically important. Probably plays a role in initiation of 16S rRNA degradation (leading to ribosome degradation) during starvation. The chain is Ribonuclease PH from Mycobacteroides abscessus (strain ATCC 19977 / DSM 44196 / CCUG 20993 / CIP 104536 / JCM 13569 / NCTC 13031 / TMC 1543 / L948) (Mycobacterium abscessus).